The primary structure comprises 373 residues: Glutamine synthetase (373 aa).

N-acetylthreonine is present on Thr-2. Residues 2 to 25 (TTSASSHLNKGIKQVYMSLPQGEK) form a required for glutamine-induced ubiquitination by CRL4(CRBN) and proteasomal degradation region. 2 positions are modified to N6-acetyllysine; by EP300: Lys-11 and Lys-14. The GS beta-grasp domain occupies 24-106 (EKVQAMYIWI…VLCEVFKYNR (83 aa)). Tyr-104 carries the post-translational modification Phosphotyrosine. A GS catalytic domain is found at 113 to 373 (LRHTCKRIMD…TGDEPFQYKN (261 aa)). Residue Glu-134 coordinates ATP. Positions 134, 136, 196, and 203 each coordinate Mn(2+). 203–208 (EFQIGP) contributes to the ATP binding site. 246–247 (NW) lines the L-glutamate pocket. His-253 contributes to the Mn(2+) binding site. ATP contacts are provided by residues 255 to 257 (NFS), Arg-319, and Arg-324. Arg-319 is a binding site for L-glutamate. 336 to 338 (YFE) serves as a coordination point for ADP. Glu-338 is a Mn(2+) binding site. Residue Arg-340 participates in L-glutamate binding. The residue at position 343 (Ser-343) is a Phosphoserine.

This sequence belongs to the glutamine synthetase family. As to quaternary structure, decamer; composed of two pentamers. Interacts with PALMD. Interacts with RHOJ. Interacts with BEST2; this interaction tethers a fraction of GLUL to the membrane, causing a decrease of cytosolic glutamine synthase (GS) activity and inhibits the chloride channel activity of BEST2 by affecting the gating at the aperture in the absence of intracellular glutamate. The cofactor is Mg(2+). Mn(2+) serves as cofactor. Acetylated by EP300/p300; acetylation is stimulated by increased glutamine levels and promotes ubiquitin-mediated proteasomal degradation. In terms of processing, palmitoylated; undergoes autopalmitoylation. Post-translationally, ubiquitinated by ZNRF1. Ubiquitinated by the DCX (DDB1-CUL4-X-box) E3 ubiquitin-protein ligase complex called CRL4(CRBN), leading to proteasomal degradation. Expressed in endothelial cells.

It is found in the cytoplasm. The protein resides in the cytosol. Its subcellular location is the microsome. The protein localises to the mitochondrion. It localises to the cell membrane. It carries out the reaction L-glutamate + NH4(+) + ATP = L-glutamine + ADP + phosphate + H(+). The catalysed reaction is L-cysteinyl-[protein] + hexadecanoyl-CoA = S-hexadecanoyl-L-cysteinyl-[protein] + CoA. With respect to regulation, glutamine synthetase activity is inhibited by methionine sulfoximine (MSO). In terms of biological role, glutamine synthetase that catalyzes the ATP-dependent conversion of glutamate and ammonia to glutamine. Its role depends on tissue localization: in the brain, it regulates the levels of toxic ammonia and converts neurotoxic glutamate to harmless glutamine, whereas in the liver, it is one of the enzymes responsible for the removal of ammonia. Plays a key role in ammonium detoxification during erythropoiesis: the glutamine synthetase activity is required to remove ammonium generated by porphobilinogen deaminase (HMBS) during heme biosynthesis to prevent ammonium accumulation and oxidative stress. Essential for proliferation of fetal skin fibroblasts. Independently of its glutamine synthetase activity, required for endothelial cell migration during vascular development: acts by regulating membrane localization and activation of the GTPase RHOJ, possibly by promoting RHOJ palmitoylation. May act as a palmitoyltransferase for RHOJ: able to autopalmitoylate and then transfer the palmitoyl group to RHOJ. Plays a role in ribosomal 40S subunit biogenesis. Through the interaction with BEST2, inhibits BEST2 channel activity by affecting the gating at the aperture in the absence of intracellular L-glutamate, but sensitizes BEST2 to intracellular L-glutamate, which promotes the opening of BEST2 and thus relieves its inhibitory effect on BEST2. This chain is Glutamine synthetase, found in Homo sapiens (Human).